Reading from the N-terminus, the 243-residue chain is Urease accessory protein UreF 2 (243 aa).

It belongs to the UreF family. In terms of assembly, ureD, UreF and UreG form a complex that acts as a GTP-hydrolysis-dependent molecular chaperone, activating the urease apoprotein by helping to assemble the nickel containing metallocenter of UreC. The UreE protein probably delivers the nickel.

Its subcellular location is the cytoplasm. Functionally, required for maturation of urease via the functional incorporation of the urease nickel metallocenter. This chain is Urease accessory protein UreF 2, found in Brucella suis (strain ATCC 23445 / NCTC 10510).